The sequence spans 242 residues: ATP synthase subunit b 2 (242 aa).

The helical transmembrane segment at 4 to 24 threads the bilayer; that stretch reads LLAISSLTLLASLVLLVVSPA. Residues 43–74 are disordered; sequence ADSEDGDHDHDHEGDDHGHDEAAGDEHGHGDG. Residues 49 to 74 show a composition bias toward basic and acidic residues; sequence DHDHDHEGDDHGHDEAAGDEHGHGDG.

It belongs to the ATPase B chain family. F-type ATPases have 2 components, F(1) - the catalytic core - and F(0) - the membrane proton channel. F(1) has five subunits: alpha(3), beta(3), gamma(1), delta(1), epsilon(1). F(0) has three main subunits: a(1), b(2) and c(10-14). The alpha and beta chains form an alternating ring which encloses part of the gamma chain. F(1) is attached to F(0) by a central stalk formed by the gamma and epsilon chains, while a peripheral stalk is formed by the delta and b chains.

The protein localises to the cell inner membrane. F(1)F(0) ATP synthase produces ATP from ADP in the presence of a proton or sodium gradient. F-type ATPases consist of two structural domains, F(1) containing the extramembraneous catalytic core and F(0) containing the membrane proton channel, linked together by a central stalk and a peripheral stalk. During catalysis, ATP synthesis in the catalytic domain of F(1) is coupled via a rotary mechanism of the central stalk subunits to proton translocation. In terms of biological role, component of the F(0) channel, it forms part of the peripheral stalk, linking F(1) to F(0). The protein is ATP synthase subunit b 2 of Rhodopirellula baltica (strain DSM 10527 / NCIMB 13988 / SH1).